The primary structure comprises 156 residues: 6,7-dimethyl-8-ribityllumazine synthase (156 aa).

5-amino-6-(D-ribitylamino)uracil is bound by residues Phe-22, 57-59, and 81-83; these read AVE and SVI. Residue 86-87 coordinates (2S)-2-hydroxy-3-oxobutyl phosphate; it reads GT. His-89 acts as the Proton donor in catalysis. Phe-114 is a 5-amino-6-(D-ribitylamino)uracil binding site. Arg-128 is a binding site for (2S)-2-hydroxy-3-oxobutyl phosphate.

This sequence belongs to the DMRL synthase family. As to quaternary structure, forms an icosahedral capsid composed of 60 subunits, arranged as a dodecamer of pentamers.

It catalyses the reaction (2S)-2-hydroxy-3-oxobutyl phosphate + 5-amino-6-(D-ribitylamino)uracil = 6,7-dimethyl-8-(1-D-ribityl)lumazine + phosphate + 2 H2O + H(+). It participates in cofactor biosynthesis; riboflavin biosynthesis; riboflavin from 2-hydroxy-3-oxobutyl phosphate and 5-amino-6-(D-ribitylamino)uracil: step 1/2. In terms of biological role, catalyzes the formation of 6,7-dimethyl-8-ribityllumazine by condensation of 5-amino-6-(D-ribitylamino)uracil with 3,4-dihydroxy-2-butanone 4-phosphate. This is the penultimate step in the biosynthesis of riboflavin. This is 6,7-dimethyl-8-ribityllumazine synthase from Aliivibrio fischeri (strain ATCC 700601 / ES114) (Vibrio fischeri).